The sequence spans 300 residues: Arrestin domain-containing protein 4 (300 aa).

2 short sequence motifs (PPxY motif) span residues Pro-231–Tyr-234 and Pro-276–Tyr-279.

This sequence belongs to the arrestin family. Interacts with ADRB2. Interacts (via PPxY motifs) with ITCH, NEDD4L and WWP2. Interacts with AVPR2. Identified in a complex containing at least ARRDC4, AVPR2 and HGS. Interacts with SLC11A2; controls the incorporation of SLC11A2 into extracellular vesicles through an ubiquitination-dependent mechanism. Interacts with TRIM65.

The protein localises to the early endosome. It is found in the cell membrane. Its subcellular location is the cytoplasmic vesicle. In terms of biological role, functions as an adapter recruiting ubiquitin-protein ligases to their specific substrates. Plays a role in endocytosis of activated G protein-coupled receptors (GPCRs) Through an ubiquitination-dependent mechanism also plays a role in the incorporation of SLC11A2 into extracellular vesicles. May play a role in glucose uptake. Participates in innate immune response by promoting IFIH1/MDA5 activation through interaction with TRIM65. The chain is Arrestin domain-containing protein 4 (Arrdc4) from Rattus norvegicus (Rat).